We begin with the raw amino-acid sequence, 388 residues long: Alanine racemase (388 aa).

K44 acts as the Proton acceptor; specific for D-alanine in catalysis. K44 carries the N6-(pyridoxal phosphate)lysine modification. R142 is a binding site for substrate. Y273 functions as the Proton acceptor; specific for L-alanine in the catalytic mechanism. M321 serves as a coordination point for substrate.

This sequence belongs to the alanine racemase family. The cofactor is pyridoxal 5'-phosphate.

It carries out the reaction L-alanine = D-alanine. The protein operates within amino-acid biosynthesis; D-alanine biosynthesis; D-alanine from L-alanine: step 1/1. Its function is as follows. Catalyzes the interconversion of L-alanine and D-alanine. May also act on other amino acids. This is Alanine racemase (alr) from Mycobacterium avium (strain 104).